The primary structure comprises 400 residues: Spaetzle-processing enzyme (400 aa).

Residues 1-27 (MASTERNFLLLSLVVSALSGLVHRSDA) form the signal peptide. Positions 34–94 (SCTPQQSDER…GLVNRILVCC (61 aa)) constitute a Clip domain. 6 disulfides stabilise this stretch: cysteine 35–cysteine 93, cysteine 46–cysteine 77, cysteine 52–cysteine 94, cysteine 127–cysteine 269, cysteine 166–cysteine 182, and cysteine 211–cysteine 221. The 265-residue stretch at 135–399 (IFGGTNTTLW…FIDWIKQKLE (265 aa)) folds into the Peptidase S1 domain. Asparagine 140 carries an N-linked (GlcNAc...) asparagine glycan. Histidine 181 (charge relay system) is an active-site residue. Ca(2+) contacts are provided by glutamate 202, aspartate 204, threonine 207, and aspartate 210. The active-site Charge relay system is aspartate 249. A glycan (N-linked (GlcNAc...) asparagine) is linked at asparagine 311. Intrachain disulfides connect cysteine 315-cysteine 332 and cysteine 342-cysteine 375. The active-site Charge relay system is the serine 346.

This sequence belongs to the peptidase S1 family. CLIP subfamily. In the active form, heterodimer of a light chain and a heavy chain; disulfide-linked. In terms of processing, proteolytically cleaved in response to Gram-negative bacterial or fungal infection; processing is likely to result in its activation. Cleavage produces a light chain containing the CLIP domain and a catalytic heavy chain which remain covalently associated through an interchain disulfide bond.

It localises to the secreted. Endopeptidase which plays a key role in innate immunity by cleaving Tl ligand spz and thereby activating the Toll pathway in response to fungal and Gram-positive bacterial infections. Acts downstream of pathogen recognition receptors PGRP-SA and GNBP1 and protease grass in response to Gram-positive bacterial infection. Acts downstream of protease psh in response to fungal infection. The protein is Spaetzle-processing enzyme of Drosophila melanogaster (Fruit fly).